The sequence spans 439 residues: Cln5-like protein 3 (439 aa).

A signal peptide spans 1–24 (MKNMLNIILTLTIIFIGLIKISIS). N-linked (GlcNAc...) asparagine glycosylation is found at N93, N112, N122, N138, N168, N219, N268, N289, N304, and N359. Residues 371-391 (IIFISIAIGFGVVIILYISIG) form a helical membrane-spanning segment.

This sequence belongs to the CLN5 family.

Its subcellular location is the membrane. The polypeptide is Cln5-like protein 3 (cln5lc) (Dictyostelium discoideum (Social amoeba)).